A 522-amino-acid chain; its full sequence is Lysine--tRNA ligase (522 aa).

A 'HIGH' region motif is present at residues 44 to 52 (PSGLPHIGT). A 'KMSKS' region motif is present at residues 290–294 (KISKS). Lys293 serves as a coordination point for ATP.

Belongs to the class-I aminoacyl-tRNA synthetase family.

It is found in the cytoplasm. The catalysed reaction is tRNA(Lys) + L-lysine + ATP = L-lysyl-tRNA(Lys) + AMP + diphosphate. In Rickettsia massiliae (strain Mtu5), this protein is Lysine--tRNA ligase.